A 339-amino-acid polypeptide reads, in one-letter code: Tetraacyldisaccharide 4'-kinase (339 aa).

Position 44-51 (44-51 (TVGGTGKT)) interacts with ATP.

Belongs to the LpxK family.

The enzyme catalyses a lipid A disaccharide + ATP = a lipid IVA + ADP + H(+). Its pathway is glycolipid biosynthesis; lipid IV(A) biosynthesis; lipid IV(A) from (3R)-3-hydroxytetradecanoyl-[acyl-carrier-protein] and UDP-N-acetyl-alpha-D-glucosamine: step 6/6. Its function is as follows. Transfers the gamma-phosphate of ATP to the 4'-position of a tetraacyldisaccharide 1-phosphate intermediate (termed DS-1-P) to form tetraacyldisaccharide 1,4'-bis-phosphate (lipid IVA). This Bdellovibrio bacteriovorus (strain ATCC 15356 / DSM 50701 / NCIMB 9529 / HD100) protein is Tetraacyldisaccharide 4'-kinase.